A 413-amino-acid chain; its full sequence is Tyrosine--tRNA ligase (413 aa).

A 'HIGH' region motif is present at residues 59-68 (PTAPDIHLGH). Positions 243-247 (KMSKS) match the 'KMSKS' region motif. Residue lysine 246 participates in ATP binding. One can recognise an S4 RNA-binding domain in the interval 351-411 (LAIGQLLKQA…GKRRFARVTL (61 aa)).

The protein belongs to the class-I aminoacyl-tRNA synthetase family. TyrS type 2 subfamily. In terms of assembly, homodimer.

The protein resides in the cytoplasm. It carries out the reaction tRNA(Tyr) + L-tyrosine + ATP = L-tyrosyl-tRNA(Tyr) + AMP + diphosphate + H(+). Catalyzes the attachment of tyrosine to tRNA(Tyr) in a two-step reaction: tyrosine is first activated by ATP to form Tyr-AMP and then transferred to the acceptor end of tRNA(Tyr). This is Tyrosine--tRNA ligase from Burkholderia pseudomallei (strain K96243).